The chain runs to 339 residues: Dihydroorotate dehydrogenase (quinone) (339 aa).

Residues 64–68 (AGADK) and Thr-88 each bind FMN. Residue Lys-68 participates in substrate binding. Residue 113–117 (NRNGF) coordinates substrate. The FMN site is built by Asn-141 and Asn-174. Asn-174 contributes to the substrate binding site. Catalysis depends on Ser-177, which acts as the Nucleophile. Position 179 (Asn-179) interacts with substrate. FMN contacts are provided by Lys-219 and Thr-247. Position 248 to 249 (248 to 249 (NT)) interacts with substrate. Residues Gly-270, Gly-299, and 320–321 (YS) each bind FMN.

Belongs to the dihydroorotate dehydrogenase family. Type 2 subfamily. Monomer. FMN serves as cofactor.

The protein localises to the cell membrane. The enzyme catalyses (S)-dihydroorotate + a quinone = orotate + a quinol. It functions in the pathway pyrimidine metabolism; UMP biosynthesis via de novo pathway; orotate from (S)-dihydroorotate (quinone route): step 1/1. In terms of biological role, catalyzes the conversion of dihydroorotate to orotate with quinone as electron acceptor. This chain is Dihydroorotate dehydrogenase (quinone), found in Haemophilus influenzae (strain 86-028NP).